A 117-amino-acid chain; its full sequence is Large ribosomal subunit protein bL17 (117 aa).

This sequence belongs to the bacterial ribosomal protein bL17 family. Part of the 50S ribosomal subunit. Contacts protein L32.

In Thermomicrobium roseum (strain ATCC 27502 / DSM 5159 / P-2), this protein is Large ribosomal subunit protein bL17.